Reading from the N-terminus, the 498-residue chain is Ulvan-active sulfatase (498 aa).

The N-terminal stretch at 1 to 22 (MNSKKTGVIILGCIAFLHIACS) is a signal peptide. 5 residues coordinate Ca(2+): D55, D56, C95, D266, and H267. Residue C95 is the Nucleophile of the active site. C95 bears the 3-oxoalanine (Cys) mark.

The protein belongs to the sulfatase family. It depends on Ca(2+) as a cofactor. In terms of processing, the conversion to 3-oxoalanine (also known as C-formylglycine, FGly), of a serine or cysteine residue in prokaryotes and of a cysteine residue in eukaryotes, is critical for catalytic activity. This post-translational modification is severely defective in multiple sulfatase deficiency (MSD).

It localises to the periplasm. Sulfatase involved in ulvan degradation. Ulvan is the main polysaccharide component of the Ulvales (green seaweed) cell wall. It is composed of disaccharide building blocks comprising 3-sulfated rhamnose (Rha3S) linked to D-glucuronic acid (GlcA), L-iduronic acid (IduA), or D-xylose (Xyl). This is Ulvan-active sulfatase from Formosa agariphila (strain DSM 15362 / KCTC 12365 / LMG 23005 / KMM 3901 / M-2Alg 35-1).